A 250-amino-acid chain; its full sequence is Cobalt transport protein CbiM (250 aa).

The N-terminal stretch at 1-27 (MKKPLFFIASACVTIYILFALSPSVYA) is a signal peptide. A run of 6 helical transmembrane segments spans residues 33–53 (GFLP…FFLV), 70–90 (LLLA…IPSV), 102–122 (LGAL…VLLF), 134–154 (TLGA…YVLF), 168–188 (VFLA…IQLA), and 208–228 (IFAV…VVVW).

The protein belongs to the CbiM family. In terms of assembly, forms an energy-coupling factor (ECF) transporter complex composed of an ATP-binding protein (A component, CbiO), a transmembrane protein (T component, CbiQ) and 2 possible substrate-capture proteins (S components, CbiM and CbiN) of unknown stoichimetry.

It is found in the cell membrane. The protein operates within cofactor biosynthesis; adenosylcobalamin biosynthesis. Part of the energy-coupling factor (ECF) transporter complex CbiMNOQ involved in cobalt import. The chain is Cobalt transport protein CbiM from Anoxybacillus flavithermus (strain DSM 21510 / WK1).